A 376-amino-acid polypeptide reads, in one-letter code: Arginine/serine-rich coiled-coil protein 2 (376 aa).

The segment at 1–171 (MIRTNFLLKQ…PSPPPFRGRN (171 aa)) is disordered. Residues 13-52 (RHESKDKSSKRHKSEEHNDKEHSSDKGRERLNSSENGEDR) are compositionally biased toward basic and acidic residues. Ser45 bears the Phosphoserine mark. Residues 53–155 (HKRKERKSSR…KRIEKPRRFS (103 aa)) show a composition bias toward basic residues. The stretch at 171-214 (NTAMDAQEALARRLERAKKLQEQREKEMVEKQKQQEMAAAAAAT) forms a coiled coil. A Glycyl lysine isopeptide (Lys-Gly) (interchain with G-Cter in SUMO1); alternate cross-link involves residue Lys317. Lys317 is covalently cross-linked (Glycyl lysine isopeptide (Lys-Gly) (interchain with G-Cter in SUMO2); alternate). Ser318 carries the phosphoserine modification.

This sequence belongs to the RSRC2 family.

This chain is Arginine/serine-rich coiled-coil protein 2 (Rsrc2), found in Rattus norvegicus (Rat).